The chain runs to 413 residues: Serine/threonine transporter SstT (413 aa).

A run of 10 helical transmembrane segments spans residues Leu-18–Ala-38, Phe-52–Ile-72, Ile-86–Met-106, Ile-119–Val-139, Ala-145–Ile-165, Leu-196–Gly-216, Leu-221–Phe-241, Val-292–Leu-312, Leu-320–Ala-340, and Leu-360–Val-380.

It belongs to the dicarboxylate/amino acid:cation symporter (DAACS) (TC 2.A.23) family.

Its subcellular location is the cell inner membrane. It catalyses the reaction L-serine(in) + Na(+)(in) = L-serine(out) + Na(+)(out). The enzyme catalyses L-threonine(in) + Na(+)(in) = L-threonine(out) + Na(+)(out). In terms of biological role, involved in the import of serine and threonine into the cell, with the concomitant import of sodium (symport system). This chain is Serine/threonine transporter SstT, found in Pseudomonas fluorescens (strain Pf0-1).